The sequence spans 879 residues: Band 4.1-like protein 1 (879 aa).

Residues 1-64 (MTTETGPDSE…RPAEQSLDME (64 aa)) form a disordered region. The segment covering 17–35 (ETPQQPEAAAAVTTPVTPA) has biased composition (low complexity). Phosphothreonine is present on threonine 30. Residues 38–50 (SHPETNSNEKHLT) are compositionally biased toward basic and acidic residues. Phosphoserine is present on serine 75. Phosphothreonine is present on threonine 79. Residues 97–378 (ATCRVTLLDA…EHHTFFRLVS (282 aa)) form the FERM domain. Tyrosine 343 is subject to Phosphotyrosine. 5 positions are modified to phosphoserine: serine 378, serine 430, serine 437, serine 461, and serine 466. The disordered stretch occupies residues 428 to 501 (SRSLDGAEFS…HKQEFLDKPE (74 aa)). The segment covering 444-501 (ENHDAGPDGDKREDDAESGGRRSEAEEGEVRTPTKIKELKPEQETTPRHKQEFLDKPE) has biased composition (basic and acidic residues). Threonine 475 bears the Phosphothreonine mark. The interval 483 to 541 (KPEQETTPRHKQEFLDKPEDVLLKHQASINELKRTLKEPNSKLIHRDRDWERERRLPSS) is spectrin--actin-binding. At serine 510 the chain carries Phosphoserine. The span at 514–538 (LKRTLKEPNSKLIHRDRDWERERRL) shows a compositional bias: basic and acidic residues. Disordered regions lie at residues 514–596 (LKRT…FLKD), 633–687 (FEDF…STPE), and 718–742 (SRVSTADSTQVDGGAPAAKDFMTTP). Serine 540, serine 541, serine 544, and serine 546 each carry phosphoserine. At threonine 550 the chain carries Phosphothreonine. Residues 550–577 (TPEKASERAGLREGSEEKVKPPRPRAPE) show a composition bias toward basic and acidic residues. A phosphoserine mark is found at serine 564 and serine 578. Threonine 580 carries the phosphothreonine modification. Phosphoserine occurs at positions 583, 587, 639, 648, 650, 665, 666, 669, 671, 677, and 684. A compositionally biased stretch (basic and acidic residues) spans 635–650 (DFSRSLPELDRDKSDS). Phosphothreonine is present on threonine 685. Polar residues predominate over residues 718–728 (SRVSTADSTQV). Residues serine 721, proline 742, alanine 766, serine 782, and serine 868 each carry the phosphoserine modification. Residues 744-879 (CITTETISTT…EERDKKPQES (136 aa)) are C-terminal (CTD).

Interacts with AGAP2. Highest expression in brain, lower in heart and kidney. Within the brain, highest expression in cerebellum.

The protein resides in the cytoplasm. It is found in the cytoskeleton. Functionally, may function to confer stability and plasticity to neuronal membrane via multiple interactions, including the spectrin-actin-based cytoskeleton, integral membrane channels and membrane-associated guanylate kinases. This is Band 4.1-like protein 1 from Rattus norvegicus (Rat).